Here is a 95-residue protein sequence, read N- to C-terminus: MASETVSNHQEKALALLQADAEKILRLIKVQMDNLTMPQCPLYEEVLDTQMFGLSREVDFAVRLGLIGEEQGKAMLGELERELSALHEAFTNKQQ.

It belongs to the UPF0358 family.

The protein is UPF0358 protein BcerKBAB4_3775 of Bacillus mycoides (strain KBAB4) (Bacillus weihenstephanensis).